The primary structure comprises 320 residues: o-succinylbenzoate synthase (320 aa).

K133 functions as the Proton donor in the catalytic mechanism. The Mg(2+) site is built by D161, E190, and D213. K235 functions as the Proton acceptor in the catalytic mechanism.

It belongs to the mandelate racemase/muconate lactonizing enzyme family. MenC type 1 subfamily. The cofactor is a divalent metal cation.

It catalyses the reaction (1R,6R)-6-hydroxy-2-succinyl-cyclohexa-2,4-diene-1-carboxylate = 2-succinylbenzoate + H2O. The protein operates within quinol/quinone metabolism; 1,4-dihydroxy-2-naphthoate biosynthesis; 1,4-dihydroxy-2-naphthoate from chorismate: step 4/7. Its pathway is quinol/quinone metabolism; menaquinone biosynthesis. Its function is as follows. Converts 2-succinyl-6-hydroxy-2,4-cyclohexadiene-1-carboxylate (SHCHC) to 2-succinylbenzoate (OSB). This is o-succinylbenzoate synthase from Escherichia coli O45:K1 (strain S88 / ExPEC).